The following is a 40-amino-acid chain: Sarcotoxin-1D (40 aa).

The protein belongs to the cecropin family.

The protein resides in the secreted. In terms of biological role, sarcotoxins, which are potent bactericidal proteins, are produced in response to injury. They are cytotoxic to both Gram-positive and Gram-negative bacteria. The sequence is that of Sarcotoxin-1D from Sarcophaga peregrina (Flesh fly).